A 320-amino-acid chain; its full sequence is Small ribosomal subunit protein uS2 (320 aa).

Over residues 1 to 22 (MADETTTDTPDVQDEDAPDEDA) the composition is skewed to acidic residues. Residues 1 to 83 (MADETTTDTP…SSSEEETSHR (83 aa)) form a disordered region. The span at 27-41 (DDTASDSTGEAAAAD) shows a compositional bias: low complexity. 2 stretches are compositionally biased toward acidic residues: residues 42–57 (TDAD…EDAP) and 65–78 (DDGD…SSEE).

Belongs to the universal ribosomal protein uS2 family.

The chain is Small ribosomal subunit protein uS2 from Salinibacter ruber (strain DSM 13855 / M31).